The primary structure comprises 364 residues: Cyclin-D3-2 (364 aa).

The disordered stretch occupies residues 331–364; that stretch reads PPGRPIKRGAAAATTADPLPADEESRDAWPPYAA. A compositionally biased stretch (low complexity) spans 340–349; that stretch reads AAAATTADPL.

The protein belongs to the cyclin family. Cyclin D subfamily.

This chain is Cyclin-D3-2 (CYCD3-2), found in Oryza sativa subsp. japonica (Rice).